The following is a 669-amino-acid chain: Sodium-dependent phosphate transporter (669 aa).

Topologically, residues 1–6 (MVTGPD) are extracellular. A helical transmembrane segment spans residues 7-27 (MLWLVITSGIACFFMAFVTGA). The Cytoplasmic segment spans residues 28–47 (NDIANTFSTSIGSKAISIKK). The helical transmembrane segment at 48–68 (ALIVAFFFEALGASLLGGTVT) threads the bilayer. Residues 69–86 (DSIRSKIINFQVFYDTPE) are Extracellular-facing. The helical transmembrane segment at 87–107 (FLMLGMCCALMGATVWLAVAT) threads the bilayer. Position 108 (Arg-108) is a topological domain, cytoplasmic. Residues 109–129 (AGLPVSTTHSIIGALLGFGLA) traverse the membrane as a helical segment. Topologically, residues 130–143 (TGNMKSIKWEKINN) are extracellular. The chain crosses the membrane as a helical span at residues 144–164 (IVISWLAAPILAGTCSAIAFT). The Cytoplasmic segment spans residues 165–186 (VLRMLILRKKNSFEIIKKMYWF). The helical transmembrane segment at 187 to 207 (LIFLITLPFSVFLIFHNPIVI) threads the bilayer. Topologically, residues 208–239 (NTQCKMKKDGKVIVSSPCYIEDWSAAHSFYAS) are extracellular. A helical transmembrane segment spans residues 240 to 260 (IICILLSSLLTAIGSFVIYII). Residues 261 to 502 (YNKRINNYNL…YNNGIRGKIK (242 aa)) lie on the Cytoplasmic side of the membrane. The segment covering 311–335 (AHNNTSNGTKQNQVGNGTKSNNNNV) has biased composition (polar residues). Disordered stretches follow at residues 311–364 (AHNN…SVEA) and 392–444 (TNMN…KNME). The span at 342–352 (KNVKSQQDDSK) shows a compositional bias: basic and acidic residues. The segment covering 395–433 (NENNNNSNKNNNSNKNNNSNKNNNSNKNNNSNNGNSNEG) has biased composition (low complexity). The helical transmembrane segment at 503–523 (VQWYILLFGGLSMSLGLSIMG) threads the bilayer. The Extracellular portion of the chain corresponds to 524-542 (YRVIKTVGMKLIKITPARG). Residues 543–563 (FTIELISGLVVLFFSICGIPL) form a helical membrane-spanning segment. The Cytoplasmic segment spans residues 564–632 (SSTHCAVSSV…TSCVNLRLFR (69 aa)). The chain crosses the membrane as a helical span at residues 633–653 (TVFLSWILTVVFSATVTAGIY). Over 654 to 669 (SFAAYSPSYIMKMQTV) the chain is Extracellular.

Belongs to the inorganic phosphate transporter (PiT) (TC 2.A.20) family.

Its subcellular location is the cell membrane. It carries out the reaction 2 Na(+)(out) + phosphate(out) = 2 Na(+)(in) + phosphate(in). Functionally, sodium-phosphate symporter which preferentially transports the monovalent form of phosphate with a stoichiometry of two sodium ions per phosphate ion. This is Sodium-dependent phosphate transporter from Plasmodium falciparum.